The sequence spans 793 residues: Methionine--tRNA ligase (793 aa).

The 'HIGH' region signature appears at 11-21 (PYVNNFPHLGN). Residues cysteine 142, cysteine 145, cysteine 155, and cysteine 158 each coordinate Zn(2+). The short motif at 334–338 (KFSKS) is the 'KMSKS' region element. ATP is bound at residue lysine 337. Residues 581–590 (SQKDRKKSEK) are compositionally biased toward basic and acidic residues. The disordered stretch occupies residues 581-610 (SQKDRKKSEKGCSACKDSGSSKSDAAASSA). The span at 591–610 (GCSACKDSGSSKSDAAASSA) shows a compositional bias: low complexity. One can recognise a tRNA-binding domain in the interval 622–727 (FSKKIALKTA…PWAAPGTPVI (106 aa)).

This sequence belongs to the class-I aminoacyl-tRNA synthetase family. MetG type 1 subfamily. As to quaternary structure, homodimer. Zn(2+) serves as cofactor.

The protein localises to the cytoplasm. The enzyme catalyses tRNA(Met) + L-methionine + ATP = L-methionyl-tRNA(Met) + AMP + diphosphate. Is required not only for elongation of protein synthesis but also for the initiation of all mRNA translation through initiator tRNA(fMet) aminoacylation. This chain is Methionine--tRNA ligase, found in Treponema denticola (strain ATCC 35405 / DSM 14222 / CIP 103919 / JCM 8153 / KCTC 15104).